The sequence spans 31 residues: Photosystem I reaction center subunit XII (31 aa).

The chain crosses the membrane as a helical span at residues 6 to 25; that stretch reads TQILAALVVALLPAFLAFRL.

Belongs to the PsaM family.

Its subcellular location is the cellular thylakoid membrane. The protein is Photosystem I reaction center subunit XII of Synechocystis sp. (strain ATCC 27184 / PCC 6803 / Kazusa).